The following is a 379-amino-acid chain: Glucose-insensitive transcription protein 7 (379 aa).

In terms of domain architecture, CS spans 181 to 272 (SNRIRYDWSQ…VSEIKWEALV (92 aa)). The region spanning 292–379 (ASGNTKNKAK…PPQGMEPKKF (88 aa)) is the SGS domain. The interval 345 to 379 (SYTESNGTALSTNWKDVKSKTFETKPPQGMEPKKF) is disordered. Over residues 346-358 (YTESNGTALSTNW) the composition is skewed to polar residues.

In terms of biological role, involved in cyclic AMP (cAMP) pathway, possibly by participating in the assembly or the conformational activation of specific multiprotein complexes. This chain is Glucose-insensitive transcription protein 7 (git7), found in Schizosaccharomyces pombe (strain 972 / ATCC 24843) (Fission yeast).